The chain runs to 399 residues: O-glucosyltransferase rumi homolog (399 aa).

Positions 1–18 are cleaved as a signal peptide; the sequence is MHFIIGIVICLSLSVIQS. Asn-19 and Asn-67 each carry an N-linked (GlcNAc...) asparagine glycan. 4 disulfide bridges follow: Cys-66-Cys-73, Cys-71-Cys-373, Cys-118-Cys-124, and Cys-277-Cys-300. Residue Asp-149 is the Proton donor/acceptor of the active site. Residues 189-194 are interaction with the consensus sequence C-X-S-X-[PA]-C in peptide substrates; sequence AIALYP. Residues 224 to 228, Arg-232, 271 to 273, and 289 to 293 contribute to the UDP-alpha-D-glucose site; these read RGSRT, VTL, and AASFR.

It belongs to the glycosyltransferase 90 family.

It is found in the endoplasmic reticulum lumen. The protein localises to the secreted. It functions in the pathway protein modification; protein glycosylation. Its function is as follows. Protein O-glucosyltransferase. Catalyzes the reaction that attaches glucose through an O-glycosidic linkage to a conserved serine residue found in the consensus sequence C-X-S-X-[PA]-C in epidermal growth factor-like repeats. Regulates Notch signaling by glucosylating Notch in the ER, glucosylation is required for the correct folding and cleavage of Notch. In Anopheles gambiae (African malaria mosquito), this protein is O-glucosyltransferase rumi homolog.